The sequence spans 297 residues: 4-hydroxy-tetrahydrodipicolinate synthase (297 aa).

Position 55 (Thr55) interacts with pyruvate. Tyr144 (proton donor/acceptor) is an active-site residue. Lys172 serves as the catalytic Schiff-base intermediate with substrate. Ile213 contributes to the pyruvate binding site.

The protein belongs to the DapA family. As to quaternary structure, homotetramer; dimer of dimers.

The protein resides in the cytoplasm. It catalyses the reaction L-aspartate 4-semialdehyde + pyruvate = (2S,4S)-4-hydroxy-2,3,4,5-tetrahydrodipicolinate + H2O + H(+). It participates in amino-acid biosynthesis; L-lysine biosynthesis via DAP pathway; (S)-tetrahydrodipicolinate from L-aspartate: step 3/4. Catalyzes the condensation of (S)-aspartate-beta-semialdehyde [(S)-ASA] and pyruvate to 4-hydroxy-tetrahydrodipicolinate (HTPA). This chain is 4-hydroxy-tetrahydrodipicolinate synthase, found in Lactococcus lactis subsp. cremoris (strain SK11).